The primary structure comprises 210 residues: Somatotropin (210 aa).

The signal sequence occupies residues 1-22; that stretch reads MGQVFLLMPVLLVSCFLSQGAA. Zn(2+) is bound at residue His-38. Cysteines 71 and 183 form a disulfide. A Zn(2+)-binding site is contributed by Glu-192. Cys-200 and Cys-208 form a disulfide bridge.

The protein belongs to the somatotropin/prolactin family.

Its subcellular location is the secreted. Growth hormone plays an important role in growth control and is involved in the regulation of several anabolic processes. Implicated as an osmoregulatory substance important for seawater adaptation. The polypeptide is Somatotropin (gh) (Oncorhynchus kisutch (Coho salmon)).